A 1191-amino-acid polypeptide reads, in one-letter code: Laminin subunit gamma-2 (1191 aa).

An N-terminal signal peptide occupies residues 1-21; it reads MPALWLSCCLGVALLLPAAQA. 12 disulfides stabilise this stretch: Cys28-Cys37, Cys30-Cys53, Cys56-Cys65, Cys68-Cys81, Cys84-Cys96, Cys86-Cys102, Cys104-Cys113, Cys116-Cys128, Cys139-Cys150, Cys141-Cys155, Cys157-Cys166, and Cys169-Cys184. Laminin EGF-like domains follow at residues 28–83, 84–130, and 139–186; these read CDCN…RCLP, CNCH…GCTR, and CDCD…GCTQ. One can recognise a Laminin EGF-like 4; first part domain in the interval 187 to 196; sequence CFCYGHSASC. Residues 213–381 form the Laminin IV type A domain; sequence QDVDGWKAVQ…SGAPAPWVER (169 aa). 2 N-linked (GlcNAc...) asparagine glycosylation sites follow: Asn342 and Asn362. A Laminin EGF-like 4; second part domain is found at 382-415; that stretch reads CVCPAGYKGQFCQECASGYKRDSARLGPFGACVP. Laminin EGF-like domains follow at residues 416–461, 462–516, and 517–572; these read CNCQ…SCKP, CPCH…PCQR, and CQCN…KCRA. 11 disulfide bridges follow: Cys462-Cys470, Cys464-Cys481, Cys484-Cys493, Cys496-Cys514, Cys517-Cys531, Cys519-Cys538, Cys541-Cys550, Cys553-Cys570, Cys573-Cys585, Cys575-Cys591, and Cys593-Cys602. Residue Asn526 is glycosylated (N-linked (GlcNAc...) asparagine). Positions 573–602 constitute a Laminin EGF-like 8; truncated domain; the sequence is CNCSPMGSEPGECRGDGSCVCKPGFGGLNC. The Cell attachment site motif lies at 586-588; sequence RGD. Residues 603–1191 are domain II and I; the sequence is DHAALTSCPA…CYNTQALEQQ (589 aa). Coiled-coil stretches lie at residues 612–710 and 759–786; these read ACYN…IRAL and LAQEATRKADSHAESANAMKQLARETED. An O-linked (Xyl...) (chondroitin sulfate) serine glycan is attached at Ser805. Asn941 is a glycosylation site (N-linked (GlcNAc...) asparagine). A coiled-coil region spans residues 946-996; sequence EVENILKNLREFDLQVEDRKAEAEEAMKRLSSISQKVADASDKTQQAETAL. The N-linked (GlcNAc...) asparagine glycan is linked to Asn1032. Positions 1139-1178 form a coiled coil; sequence LMSDLEERVRRQRNHLHLLETSIDGILADVKNLENIRDNL.

Laminin is a complex glycoprotein, consisting of three different polypeptide chains (alpha, beta, gamma), which are bound to each other by disulfide bonds into a cross-shaped molecule comprising one long and three short arms with globules at each end. Gamma-2 is a subunit of laminin-5 (laminin-332 or epiligrin/kalinin/nicein). Binds to fibulin-1, fibulin-1c, fibulin-2 and nidogen. O-glycosylated; contains chondroitin sulfate (CS). As to expression, epithelial cells of many tissues, particularly high levels in tongue, hair follicles and kidney. Basement membranes of the collecting tubules of kidney and pancreas.

Its subcellular location is the secreted. The protein resides in the extracellular space. It is found in the extracellular matrix. The protein localises to the basement membrane. Binding to cells via a high affinity receptor, laminin is thought to mediate the attachment, migration and organization of cells into tissues during embryonic development by interacting with other extracellular matrix components. The chain is Laminin subunit gamma-2 (Lamc2) from Mus musculus (Mouse).